The primary structure comprises 614 residues: Dihydroxy-acid dehydratase (614 aa).

Mg(2+) is bound at residue D81. C122 lines the [2Fe-2S] cluster pocket. Mg(2+) is bound by residues D123 and K124. K124 bears the N6-carboxylysine mark. C193 lines the [2Fe-2S] cluster pocket. A Mg(2+)-binding site is contributed by E489. The active-site Proton acceptor is the S515.

It belongs to the IlvD/Edd family. Homodimer. [2Fe-2S] cluster is required as a cofactor. It depends on Mg(2+) as a cofactor.

The catalysed reaction is (2R)-2,3-dihydroxy-3-methylbutanoate = 3-methyl-2-oxobutanoate + H2O. The enzyme catalyses (2R,3R)-2,3-dihydroxy-3-methylpentanoate = (S)-3-methyl-2-oxopentanoate + H2O. It functions in the pathway amino-acid biosynthesis; L-isoleucine biosynthesis; L-isoleucine from 2-oxobutanoate: step 3/4. It participates in amino-acid biosynthesis; L-valine biosynthesis; L-valine from pyruvate: step 3/4. Functionally, functions in the biosynthesis of branched-chain amino acids. Catalyzes the dehydration of (2R,3R)-2,3-dihydroxy-3-methylpentanoate (2,3-dihydroxy-3-methylvalerate) into 2-oxo-3-methylpentanoate (2-oxo-3-methylvalerate) and of (2R)-2,3-dihydroxy-3-methylbutanoate (2,3-dihydroxyisovalerate) into 2-oxo-3-methylbutanoate (2-oxoisovalerate), the penultimate precursor to L-isoleucine and L-valine, respectively. The chain is Dihydroxy-acid dehydratase from Cellvibrio japonicus (strain Ueda107) (Pseudomonas fluorescens subsp. cellulosa).